We begin with the raw amino-acid sequence, 191 residues long: Xanthine phosphoribosyltransferase (191 aa).

Leu20 and Asn27 together coordinate xanthine. 128 to 132 (ANGQA) is a binding site for 5-phospho-alpha-D-ribose 1-diphosphate. Residue Lys156 participates in xanthine binding.

It belongs to the purine/pyrimidine phosphoribosyltransferase family. Xpt subfamily. As to quaternary structure, homodimer.

It localises to the cytoplasm. It carries out the reaction XMP + diphosphate = xanthine + 5-phospho-alpha-D-ribose 1-diphosphate. It participates in purine metabolism; XMP biosynthesis via salvage pathway; XMP from xanthine: step 1/1. Functionally, converts the preformed base xanthine, a product of nucleic acid breakdown, to xanthosine 5'-monophosphate (XMP), so it can be reused for RNA or DNA synthesis. This chain is Xanthine phosphoribosyltransferase, found in Limosilactobacillus reuteri (strain DSM 20016) (Lactobacillus reuteri).